Reading from the N-terminus, the 377-residue chain is Probable dehydratase NIT22 (377 aa).

Lys101 and Arg196 together coordinate NADP(+). The interval 220–243 (ERGPKMNEHVPSTPPRRPDAVSSF) is disordered. Residues 233 to 332 (PPRRPDAVSS…ILMWDMGLCK (100 aa)) enclose the MaoC-like domain. Positions 265 and 287 each coordinate NADP(+).

The protein belongs to the short-chain dehydrogenases/reductases (SDR) family.

It participates in siderophore biosynthesis. Functionally, probable dehydratase; part of the gene cluster that mediates the biosynthesis of hydroxamate-containing siderophores that play a critical role in virulence via intracellular iron acquisition during macrophage infection. The sequence is that of Probable dehydratase NIT22 from Ajellomyces capsulatus (Darling's disease fungus).